The sequence spans 213 residues: Cytochrome b6 (213 aa).

Residues 30-50 (IFFCLGGLTLLCFIVQCLTGI) traverse the membrane as a helical segment. Cysteine 33 contacts heme c. Heme b contacts are provided by histidine 84 and histidine 98. 3 consecutive transmembrane segments (helical) span residues 88–108 (CQLM…TGAF), 114–134 (LNWV…FTGY), and 184–204 (LHVM…FIMI). The heme b site is built by histidine 185 and histidine 200.

This sequence belongs to the cytochrome b family. PetB subfamily. The subunits of the cytochrome bc complex are a Rieske Fe-S protein (PetC), cytochrome b6 (PetB), subunit IV (PetD), and a diheme cytochrome c (PetX). Heme b serves as cofactor. Heme c is required as a cofactor.

Its subcellular location is the cell membrane. In terms of biological role, component of the cytochrome bc complex which donates electrons to the photosynthetic reaction center. This chain is Cytochrome b6, found in Heliomicrobium gestii (Heliobacterium gestii).